The primary structure comprises 73 residues: Conotoxin Lt9a (73 aa).

The first 23 residues, 1 to 23 (MTLTKSAVLILVLLLAFDNFADV), serve as a signal peptide directing secretion. A propeptide spanning residues 24–40 (QPGLITMGGGRLSNLLS) is cleaved from the precursor. 3 disulfides stabilise this stretch: C48-C62, C53-C64, and C59-C69.

The protein belongs to the conotoxin P superfamily. Expressed by the venom duct.

The protein resides in the secreted. In terms of biological role, probable neurotoxin that inhibits ion channels. This chain is Conotoxin Lt9a, found in Conus litteratus (Lettered cone).